The chain runs to 449 residues: Phosphoglucosamine mutase (449 aa).

Serine 100 acts as the Phosphoserine intermediate in catalysis. Mg(2+) contacts are provided by serine 100, aspartate 241, aspartate 243, and aspartate 245. A Phosphoserine modification is found at serine 100.

The protein belongs to the phosphohexose mutase family. It depends on Mg(2+) as a cofactor. In terms of processing, activated by phosphorylation.

The catalysed reaction is alpha-D-glucosamine 1-phosphate = D-glucosamine 6-phosphate. Its function is as follows. Catalyzes the conversion of glucosamine-6-phosphate to glucosamine-1-phosphate. This is Phosphoglucosamine mutase from Clostridium botulinum (strain Kyoto / Type A2).